Reading from the N-terminus, the 101-residue chain is Large ribosomal subunit protein bL21 (101 aa).

It belongs to the bacterial ribosomal protein bL21 family. In terms of assembly, part of the 50S ribosomal subunit. Contacts protein L20.

In terms of biological role, this protein binds to 23S rRNA in the presence of protein L20. The protein is Large ribosomal subunit protein bL21 of Sulfurovum sp. (strain NBC37-1).